The following is a 443-amino-acid chain: Glutamate-1-semialdehyde 2,1-aminomutase (443 aa).

Low complexity predominate over residues 1-16 (MSVNADSQHSNNSSHQ). The disordered stretch occupies residues 1 to 22 (MSVNADSQHSNNSSHQASEKAF). Lys277 carries the N6-(pyridoxal phosphate)lysine modification.

Belongs to the class-III pyridoxal-phosphate-dependent aminotransferase family. HemL subfamily. As to quaternary structure, homodimer. Pyridoxal 5'-phosphate serves as cofactor.

It localises to the cytoplasm. It carries out the reaction (S)-4-amino-5-oxopentanoate = 5-aminolevulinate. It participates in porphyrin-containing compound metabolism; protoporphyrin-IX biosynthesis; 5-aminolevulinate from L-glutamyl-tRNA(Glu): step 2/2. The chain is Glutamate-1-semialdehyde 2,1-aminomutase from Corynebacterium jeikeium (strain K411).